The sequence spans 150 residues: Small ribosomal subunit protein eS19 (150 aa).

This sequence belongs to the eukaryotic ribosomal protein eS19 family. Part of the 30S ribosomal subunit.

Functionally, may be involved in maturation of the 30S ribosomal subunit. This chain is Small ribosomal subunit protein eS19 (rps19e), found in Pyrococcus abyssi (strain GE5 / Orsay).